A 340-amino-acid polypeptide reads, in one-letter code: Phosphate acyltransferase (340 aa).

Belongs to the PlsX family. Homodimer. Probably interacts with PlsY.

It localises to the cytoplasm. It catalyses the reaction a fatty acyl-[ACP] + phosphate = an acyl phosphate + holo-[ACP]. It participates in lipid metabolism; phospholipid metabolism. Its function is as follows. Catalyzes the reversible formation of acyl-phosphate (acyl-PO(4)) from acyl-[acyl-carrier-protein] (acyl-ACP). This enzyme utilizes acyl-ACP as fatty acyl donor, but not acyl-CoA. In Pseudomonas syringae pv. tomato (strain ATCC BAA-871 / DC3000), this protein is Phosphate acyltransferase.